The following is a 277-amino-acid chain: Peptide deformylase 1A, chloroplastic (277 aa).

Cys196 and His238 together coordinate Zn(2+). The active site involves Glu239. Residue His242 participates in Zn(2+) binding.

This sequence belongs to the polypeptide deformylase family. It depends on Zn(2+) as a cofactor.

Its subcellular location is the plastid. It is found in the chloroplast stroma. It carries out the reaction N-terminal N-formyl-L-methionyl-[peptide] + H2O = N-terminal L-methionyl-[peptide] + formate. Removes the formyl group from the N-terminal Met of newly synthesized proteins. This is Peptide deformylase 1A, chloroplastic (PDF1A) from Solanum lycopersicum (Tomato).